The following is a 159-amino-acid chain: uncharacterized protein (159 aa).

Residues 7-151 enclose the N-acetyltransferase domain; it reads LLINYKTLEE…NPLVWHPASE (145 aa).

This is an uncharacterized protein from Bacillus licheniformis (strain ATCC 14580 / DSM 13 / JCM 2505 / CCUG 7422 / NBRC 12200 / NCIMB 9375 / NCTC 10341 / NRRL NRS-1264 / Gibson 46).